Here is a 597-residue protein sequence, read N- to C-terminus: MDHIRNFSIIAHIDHGKSTLADRIIQLCGGLSDREMEAQVLDSMDIEKERGITIKAQTAALTYKARDGKVYNLNLIDTPGHVDFSYEVSRSLSACEGALLVVDASQGVEAQTVANCYTAIELGVEVVPVLNKIDLPQADPANAIQEIEDVIGIDAHDATPCSAKTGQGVEDVIEALIAKVPPPKGDASAPLQALIIDSWFDNYVGVVMLVRVVNGTLRPKDKALLMATGAQHLVEQVGVFSPKSVQRDSLTAGQVGFVIAGIKELKAAKVGDTITTLPRKAEAPLPGFKEVKPQVFAGLYPVEANQYEALRESLEKLRLNDASLMFEPEVSQALGFGFRCGFLGLLHMEIVQERLEREFDMDLITTAPTVVYQVQMRDGTMVTVENPAKMPDPSRIEAILEPIVTVNLYMPQEYVGSVITLCTQKRGSQINMSYHGKQVQLTYEIPMAEIVMDFFDRLKSVSRGYASMDYEFKEYRPSDVVKVDILINSDKVDALSVIVHRSNSQYRGREVAAKMREIIPRQMYDVAIQAAIGSNIIARENVKALRKNVLAKCYGGDISRKKKLLEKQKAGKKRMKQVGTVEIPQEAFLAILQVDDK.

A tr-type G domain is found at 2–184; sequence DHIRNFSIIA…ALIAKVPPPK (183 aa). GTP contacts are provided by residues 14-19 and 131-134; these read DHGKST and NKID.

This sequence belongs to the TRAFAC class translation factor GTPase superfamily. Classic translation factor GTPase family. LepA subfamily.

The protein localises to the cell inner membrane. It catalyses the reaction GTP + H2O = GDP + phosphate + H(+). Required for accurate and efficient protein synthesis under certain stress conditions. May act as a fidelity factor of the translation reaction, by catalyzing a one-codon backward translocation of tRNAs on improperly translocated ribosomes. Back-translocation proceeds from a post-translocation (POST) complex to a pre-translocation (PRE) complex, thus giving elongation factor G a second chance to translocate the tRNAs correctly. Binds to ribosomes in a GTP-dependent manner. This chain is Elongation factor 4, found in Cupriavidus pinatubonensis (strain JMP 134 / LMG 1197) (Cupriavidus necator (strain JMP 134)).